Consider the following 208-residue polypeptide: MTADISAAPVAPQMRPLGPLIPASELNIWHSAGDALAAAKRHQQRVRTWARAAYQRERARGYAEGLNTGAEEMSGLIARAVTEVAQRKAVLEKELPQLVIEILSDLLGAFDPGELLVRAVRHAIERRYNGAEEVCLHVCPTQVDMLAREFAGCDGREKRPKVRIEPDPTLSPQECVLWSEYGNVALGLDAQMRALRLGFEYLSEEGEL.

Belongs to the SctL stator family. The core secretion machinery of the T3SS is composed of approximately 20 different proteins, including cytoplasmic components, a base, an export apparatus and a needle. This subunit is part of the cytosolic complex.

The protein localises to the cytoplasm. Functionally, component of the type III secretion system (T3SS), also called injectisome, which is used to inject bacterial effector proteins into eukaryotic host cells. Acts as a regulator of the HrcN/SctN ATPase activity. This chain is Type 3 secretion system stator protein, found in Sinorhizobium fredii (strain NBRC 101917 / NGR234).